The sequence spans 377 residues: Nitric oxide reductase FlRd-NAD(+) reductase (377 aa).

It belongs to the FAD-dependent oxidoreductase family. The cofactor is FAD.

It localises to the cytoplasm. The catalysed reaction is 2 reduced [nitric oxide reductase rubredoxin domain] + NAD(+) + H(+) = 2 oxidized [nitric oxide reductase rubredoxin domain] + NADH. Its pathway is nitrogen metabolism; nitric oxide reduction. One of at least two accessory proteins for anaerobic nitric oxide (NO) reductase. Reduces the rubredoxin moiety of NO reductase. The chain is Nitric oxide reductase FlRd-NAD(+) reductase from Escherichia fergusonii (strain ATCC 35469 / DSM 13698 / CCUG 18766 / IAM 14443 / JCM 21226 / LMG 7866 / NBRC 102419 / NCTC 12128 / CDC 0568-73).